The primary structure comprises 287 residues: Uroplakin-3a (287 aa).

Residues 1-18 (MPPLWALLALGCLRFGSA) form the signal peptide. The Lumenal portion of the chain corresponds to 19–207 (VNLQPQLASV…DTWPGRRSGG (189 aa)). Residues Asn74, Asn139, and Asn170 are each glycosylated (N-linked (GlcNAc...) asparagine). A helical membrane pass occupies residues 208–235 (MIVITSILGSLPFFLLVGFAGAIALSLV). Residues 236-287 (DMGSSDGETTHDSQITQEAVPKSLGASESSYTSVNRGPPLDRAEVYSSKLQD) are Cytoplasmic-facing. Residues 242-287 (GETTHDSQITQEAVPKSLGASESSYTSVNRGPPLDRAEVYSSKLQD) form a disordered region. Residues 261-270 (ASESSYTSVN) are compositionally biased toward polar residues.

Belongs to the uroplakin-3 family. Heterodimer with uroplakin-1B (UPK1B). Expressed in ureter.

It is found in the endoplasmic reticulum membrane. Component of the asymmetric unit membrane (AUM); a highly specialized biomembrane elaborated by terminally differentiated urothelial cells. May play an important role in AUM-cytoskeleton interaction in terminally differentiated urothelial cells. It also contributes to the formation of urothelial glycocalyx which may play an important role in preventing bacterial adherence. The chain is Uroplakin-3a (UPK3A) from Homo sapiens (Human).